The chain runs to 565 residues: Maturase K (565 aa).

It belongs to the intron maturase 2 family. MatK subfamily.

The protein localises to the plastid. Its subcellular location is the chloroplast. Its function is as follows. Usually encoded in the trnK tRNA gene intron. Probably assists in splicing its own and other chloroplast group II introns. The sequence is that of Maturase K from Staurastrum punctulatum (Green alga).